Here is a 75-residue protein sequence, read N- to C-terminus: MKEQKRISESLITESLTNDMFWVCLENEDPILGYVSGRIRHSFIHILVKISVSCYDSTRTRRRIIYRLRNKDSND.

It belongs to the IF-1 family. Component of the 30S ribosomal translation pre-initiation complex which assembles on the 30S ribosome in the order IF-2 and IF-3, IF-1 and N-formylmethionyl-tRNA(fMet); mRNA recruitment can occur at any time during PIC assembly.

The protein localises to the plastid. Its subcellular location is the chloroplast. One of the essential components for the initiation of protein synthesis. Stabilizes the binding of IF-2 and IF-3 on the 30S subunit to which N-formylmethionyl-tRNA(fMet) subsequently binds. Helps modulate mRNA selection, yielding the 30S pre-initiation complex (PIC). Upon addition of the 50S ribosomal subunit IF-1, IF-2 and IF-3 are released leaving the mature 70S translation initiation complex. The polypeptide is Translation initiation factor IF-1, chloroplastic (infA) (Cucumis sativus (Cucumber)).